Reading from the N-terminus, the 288-residue chain is 4-diphosphocytidyl-2-C-methyl-D-erythritol kinase (288 aa).

Lys12 is an active-site residue. 95–105 (PAGGGVGGGSS) contributes to the ATP binding site. Residue Asp137 is part of the active site.

It belongs to the GHMP kinase family. IspE subfamily.

The catalysed reaction is 4-CDP-2-C-methyl-D-erythritol + ATP = 4-CDP-2-C-methyl-D-erythritol 2-phosphate + ADP + H(+). It participates in isoprenoid biosynthesis; isopentenyl diphosphate biosynthesis via DXP pathway; isopentenyl diphosphate from 1-deoxy-D-xylulose 5-phosphate: step 3/6. In terms of biological role, catalyzes the phosphorylation of the position 2 hydroxy group of 4-diphosphocytidyl-2C-methyl-D-erythritol. This chain is 4-diphosphocytidyl-2-C-methyl-D-erythritol kinase, found in Halorhodospira halophila (strain DSM 244 / SL1) (Ectothiorhodospira halophila (strain DSM 244 / SL1)).